A 388-amino-acid chain; its full sequence is Gastricsin (388 aa).

The signal sequence occupies residues 1-16; the sequence is MKWMVVAFICLQLLEA. Residues 17–59 constitute a propeptide, activation peptide; that stretch reads TVVKVPLKKFKSIRETMKEKGLLWEFLKTHKHDPARKYRVSDL. A Peptidase A1 domain is found at 73–385; it reads YFGEISIGTP…DLGNNRVGFA (313 aa). Asp91 is a catalytic residue. Disulfide bonds link Cys104/Cys109 and Cys267/Cys271. Asp276 is an active-site residue. Cysteines 310 and 343 form a disulfide.

This sequence belongs to the peptidase A1 family.

It is found in the secreted. The enzyme catalyses More restricted specificity than pepsin A, but shows preferential cleavage at Tyr-|-Xaa bonds. High activity on hemoglobin.. Its activity is regulated as follows. Inhibited by pepstatin. In terms of biological role, hydrolyzes a variety of proteins. The sequence is that of Gastricsin (PGC) from Callithrix jacchus (White-tufted-ear marmoset).